Reading from the N-terminus, the 546-residue chain is Chaperonin GroEL 1 (546 aa).

ATP-binding positions include 30 to 33, Lys51, 87 to 91, Gly415, 479 to 481, and Asp495; these read TLGP, DGTTT, and NAA.

This sequence belongs to the chaperonin (HSP60) family. Forms a cylinder of 14 subunits composed of two heptameric rings stacked back-to-back. Interacts with the co-chaperonin GroES.

The protein localises to the cytoplasm. The enzyme catalyses ATP + H2O + a folded polypeptide = ADP + phosphate + an unfolded polypeptide.. Functionally, together with its co-chaperonin GroES, plays an essential role in assisting protein folding. The GroEL-GroES system forms a nano-cage that allows encapsulation of the non-native substrate proteins and provides a physical environment optimized to promote and accelerate protein folding. In Vibrio vulnificus (strain CMCP6), this protein is Chaperonin GroEL 1.